Consider the following 652-residue polypeptide: DNA ligase (652 aa).

NAD(+)-binding positions include 29-33 (DAEYD), 78-79 (SL), and Glu-107. The N6-AMP-lysine intermediate role is filled by Lys-109. NAD(+)-binding residues include Arg-130, Glu-164, Lys-278, and Lys-302. Zn(2+) contacts are provided by Cys-395, Cys-398, Cys-413, and Cys-418. The 76-residue stretch at 577 to 652 (TDDAILSGKT…VKDEAWLLDL (76 aa)) folds into the BRCT domain.

It belongs to the NAD-dependent DNA ligase family. LigA subfamily. Requires Mg(2+) as cofactor. Mn(2+) serves as cofactor.

It carries out the reaction NAD(+) + (deoxyribonucleotide)n-3'-hydroxyl + 5'-phospho-(deoxyribonucleotide)m = (deoxyribonucleotide)n+m + AMP + beta-nicotinamide D-nucleotide.. In terms of biological role, DNA ligase that catalyzes the formation of phosphodiester linkages between 5'-phosphoryl and 3'-hydroxyl groups in double-stranded DNA using NAD as a coenzyme and as the energy source for the reaction. It is essential for DNA replication and repair of damaged DNA. This is DNA ligase from Streptococcus thermophilus (strain ATCC BAA-491 / LMD-9).